The following is a 323-amino-acid chain: MIEFGNFYQLIAKNHLSHWLETLPAQIAAWQREQQHGLFKQWSNAVEFLPEMTPWRLDLLHSVTAESETPLSEGQLKRIDTLLRNLMPWRKGPFSLYGVDIDTEWRSDWKWDRVLPHLSDLTGRTILDVGCGSGYHLWRMIGAGAHLAVGIDPTQLFLCQFEAVRKLLGNDQRAHLLPLGIEQLPALKAFDTVFSMGVLYHRRSPLEHLWQLKDQLVNEGELVLETLVIDGDENTVLVPGDRYAQMRNVYFIPSAPALKKWLEKCGFIDVRIADVCVTTTEEQRRTEWMVTESLADFLDPNDRSKTVEGYPAPQRAVLIARKP.

Carboxy-S-adenosyl-L-methionine-binding positions include Lys91, Trp105, Lys110, Gly130, 152–154 (DPT), 181–182 (IE), Met196, Tyr200, and Arg315.

Belongs to the class I-like SAM-binding methyltransferase superfamily. CmoB family. In terms of assembly, homotetramer.

It catalyses the reaction carboxy-S-adenosyl-L-methionine + 5-hydroxyuridine(34) in tRNA = 5-carboxymethoxyuridine(34) in tRNA + S-adenosyl-L-homocysteine + H(+). In terms of biological role, catalyzes carboxymethyl transfer from carboxy-S-adenosyl-L-methionine (Cx-SAM) to 5-hydroxyuridine (ho5U) to form 5-carboxymethoxyuridine (cmo5U) at position 34 in tRNAs. The sequence is that of tRNA U34 carboxymethyltransferase from Salmonella paratyphi B (strain ATCC BAA-1250 / SPB7).